Reading from the N-terminus, the 298-residue chain is N-acetylmuramic acid 6-phosphate etherase (298 aa).

Residues 55 to 218 form the SIS domain; it reads IHAQVSGGGR…STGLMIKSGK (164 aa). Catalysis depends on E83, which acts as the Proton donor. E114 is a catalytic residue.

The protein belongs to the GCKR-like family. MurNAc-6-P etherase subfamily. In terms of assembly, homodimer.

It carries out the reaction N-acetyl-D-muramate 6-phosphate + H2O = N-acetyl-D-glucosamine 6-phosphate + (R)-lactate. It functions in the pathway amino-sugar metabolism; 1,6-anhydro-N-acetylmuramate degradation. Its pathway is amino-sugar metabolism; N-acetylmuramate degradation. It participates in cell wall biogenesis; peptidoglycan recycling. Functionally, specifically catalyzes the cleavage of the D-lactyl ether substituent of MurNAc 6-phosphate, producing GlcNAc 6-phosphate and D-lactate. Together with AnmK, is also required for the utilization of anhydro-N-acetylmuramic acid (anhMurNAc) either imported from the medium or derived from its own cell wall murein, and thus plays a role in cell wall recycling. The protein is N-acetylmuramic acid 6-phosphate etherase of Escherichia fergusonii (strain ATCC 35469 / DSM 13698 / CCUG 18766 / IAM 14443 / JCM 21226 / LMG 7866 / NBRC 102419 / NCTC 12128 / CDC 0568-73).